Here is a 463-residue protein sequence, read N- to C-terminus: SCF E3 ubiquitin ligase complex F-box protein pof2 (463 aa).

Residues 1-42 (MRVPNEVCFNILSYLEADELRCKSTVCTSWRNFIIPTLWEKV) enclose the F-box domain. 10 LRR repeats span residues 145-170 (CPNL…IIKR), 171-196 (CPYL…LSEK), 198-220 (DLIE…SRLV), 225-247 (GLKE…LNLN), 249-271 (ELDA…DIEL), 278-299 (KLNS…LSLT), 304-326 (SLTT…CLLK), 328-353 (CKNI…IAKL), 354-378 (PYLQ…LSGS), and 380-405 (SRNL…LMYN).

As to quaternary structure, part of a SCF E3 ubiquitin ligase complex. Interacts with skp1.

The protein localises to the mitochondrion. Involved in substrate recognition in ubiquitin-dependent degradation. In Schizosaccharomyces pombe (strain 972 / ATCC 24843) (Fission yeast), this protein is SCF E3 ubiquitin ligase complex F-box protein pof2 (pof2).